We begin with the raw amino-acid sequence, 483 residues long: Probable 4-hydroxyphenylacetate 3-monooxygenase (483 aa).

Substrate is bound by residues 104-108 (RSPDY) and histidine 150. Residues 150–152 (HTF), 156–159 (QVNR), and threonine 193 each bind FAD. 206–207 (AP) contributes to the substrate binding site. Residue 452-455 (DPIR) coordinates FAD.

The protein belongs to the FADH(2)-utilizing monooxygenase family.

It catalyses the reaction 4-hydroxyphenylacetate + FADH2 + O2 = 3,4-dihydroxyphenylacetate + FAD + H2O + H(+). The protein operates within aromatic compound metabolism; 4-hydroxyphenylacetate degradation; pyruvate and succinate semialdehyde from 4-hydroxyphenylacetate: step 1/7. Its function is as follows. Catalyzes the hydroxylation of 4-hydroxyphenylacetic acid (4HPA), leading to the production of 3,4-dihydroxyphenylacetic acid (DHPA). This Bacillus subtilis (strain 168) protein is Probable 4-hydroxyphenylacetate 3-monooxygenase (yoaI).